Here is a 417-residue protein sequence, read N- to C-terminus: UDP-N-acetylglucosamine 1-carboxyvinyltransferase (417 aa).

22–23 (KN) serves as a coordination point for phosphoenolpyruvate. Arginine 91 contributes to the UDP-N-acetyl-alpha-D-glucosamine binding site. Cysteine 115 acts as the Proton donor in catalysis. Cysteine 115 carries the post-translational modification 2-(S-cysteinyl)pyruvic acid O-phosphothioketal. Residues 120-124 (RPVDL), aspartate 304, and isoleucine 326 contribute to the UDP-N-acetyl-alpha-D-glucosamine site.

The protein belongs to the EPSP synthase family. MurA subfamily.

It localises to the cytoplasm. It catalyses the reaction phosphoenolpyruvate + UDP-N-acetyl-alpha-D-glucosamine = UDP-N-acetyl-3-O-(1-carboxyvinyl)-alpha-D-glucosamine + phosphate. It functions in the pathway cell wall biogenesis; peptidoglycan biosynthesis. Cell wall formation. Adds enolpyruvyl to UDP-N-acetylglucosamine. The polypeptide is UDP-N-acetylglucosamine 1-carboxyvinyltransferase (Nitratidesulfovibrio vulgaris (strain DP4) (Desulfovibrio vulgaris)).